The primary structure comprises 212 residues: Ribonuclease HII (212 aa).

Positions 1–204 (MRVGIDEAGR…LRSTAPLYYI (204 aa)) constitute an RNase H type-2 domain. A divalent metal cation is bound by residues Asp-6, Glu-7, and Asp-103.

Belongs to the RNase HII family. Mn(2+) serves as cofactor. Requires Mg(2+) as cofactor.

Its subcellular location is the cytoplasm. It catalyses the reaction Endonucleolytic cleavage to 5'-phosphomonoester.. Functionally, endonuclease that specifically degrades the RNA of RNA-DNA hybrids. This is Ribonuclease HII from Saccharolobus solfataricus (strain ATCC 35092 / DSM 1617 / JCM 11322 / P2) (Sulfolobus solfataricus).